Reading from the N-terminus, the 317-residue chain is Tumor necrosis factor ligand superfamily member 11 (317 aa).

A compositionally biased stretch (basic and acidic residues) spans 1–16 (MRRASRDYTKYLRGSE). Positions 1-43 (MRRASRDYTKYLRGSEEMGGGPGAPHEGPLHAPPPPAPHQPPA) are disordered. Residues 1–47 (MRRASRDYTKYLRGSEEMGGGPGAPHEGPLHAPPPPAPHQPPAASRS) lie on the Cytoplasmic side of the membrane. Positions 31–41 (HAPPPPAPHQP) are enriched in pro residues. The chain crosses the membrane as a helical; Signal-anchor for type II membrane protein span at residues 48 to 68 (MFVALLGLGLGQVVCSVALFF). Topologically, residues 69–317 (YFRAQMDPNR…FGAFKVRDID (249 aa)) are extracellular. One can recognise a THD domain in the interval 164–313 (PFAHLTINAT…DATYFGAFKV (150 aa)). N-linked (GlcNAc...) asparagine glycans are attached at residues Asn-171 and Asn-198.

This sequence belongs to the tumor necrosis factor family. In terms of assembly, homotrimer. Interacts with TNFRSF11B. Interacts with TNFRSF11A. Interacts with FBN1 (via N-terminal domain) in a Ca(+2)-dependent manner. Interacts with TNFAIP6 (via both Link and CUB domains). The soluble form of isoform 1 derives from the membrane form by proteolytic processing. The cleavage may be catalyzed by ADAM17. In terms of tissue distribution, highest in the peripheral lymph nodes, weak in spleen, peripheral blood Leukocytes, bone marrow, heart, placenta, skeletal muscle, stomach and thyroid.

Its subcellular location is the cell membrane. The protein resides in the cytoplasm. The protein localises to the secreted. Functionally, cytokine that binds to TNFRSF11B/OPG and to TNFRSF11A/RANK. Osteoclast differentiation and activation factor. Augments the ability of dendritic cells to stimulate naive T-cell proliferation. May be an important regulator of interactions between T-cells and dendritic cells and may play a role in the regulation of the T-cell-dependent immune response. May also play an important role in enhanced bone-resorption in humoral hypercalcemia of malignancy. Induces osteoclastogenesis by activating multiple signaling pathways in osteoclast precursor cells, chief among which is induction of long lasting oscillations in the intracellular concentration of Ca (2+) resulting in the activation of NFATC1, which translocates to the nucleus and induces osteoclast-specific gene transcription to allow differentiation of osteoclasts. During osteoclast differentiation, in a TMEM64 and ATP2A2-dependent manner induces activation of CREB1 and mitochondrial ROS generation necessary for proper osteoclast generation. This Homo sapiens (Human) protein is Tumor necrosis factor ligand superfamily member 11 (TNFSF11).